The primary structure comprises 36 residues: Potassium channel toxin alpha-KTx 23.1 (36 aa).

4 cysteine pairs are disulfide-bonded: C6–C26, C12–C31, C16–C33, and C21–C36. Position 36 is a cysteine amide (C36).

This sequence belongs to the short scorpion toxin superfamily. Potassium channel inhibitor family. Alpha-KTx 23 subfamily. In terms of tissue distribution, expressed by the venom gland.

It is found in the secreted. Its function is as follows. Voltage-gated potassium channel inhibitor. Selectively and irreversibly binds (K(d)=2.9 pM) and blocks hKv1.3/KCNA3 potassium channels of human T-lymphocytes. Weakly blocks hKCa3.1/KCNN4, mKv1.1/KCNA1, and hKv1.2/KCNA2 channels. In vivo, high doses (200 ug) produce no symptoms of intoxication when injected into mice. The sequence is that of Potassium channel toxin alpha-KTx 23.1 from Vaejovis mexicanus smithi (Mexican scorpion).